Consider the following 259-residue polypeptide: 7alpha-hydroxysteroid dehydrogenase (259 aa).

Residues Ile18, 37 to 38 (DY), and Asn90 each bind NAD(+). The glycochenodeoxycholate site is built by Ser145 and Tyr158. NAD(+) is bound by residues Tyr158, Lys162, and 191-193 (ILT). The active-site Proton acceptor is the Tyr158.

The protein belongs to the short-chain dehydrogenases/reductases (SDR) family. Homotetramer.

It carries out the reaction cholate + NAD(+) = 3alpha,12alpha-dihydroxy-7-oxo-5beta-cholanate + NADH + H(+). The enzyme catalyses chenodeoxycholate + NAD(+) = 7-oxolithocholate + NADH + H(+). It catalyses the reaction taurochenodeoxycholate + NAD(+) = 7-oxotaurolithocholate + NADH + H(+). The catalysed reaction is glycochenodeoxycholate + NAD(+) = 7-oxoglycolithocholate + NADH + H(+). It carries out the reaction taurocholate + NAD(+) = 7-oxo-taurodeoxycholate + NADH + H(+). The enzyme catalyses glycocholate + NAD(+) = 7-oxo-glycodeoxycholate + NADH + H(+). It catalyses the reaction an aromatic primary alcohol + NAD(+) = an aromatic aldehyde + NADH + H(+). The catalysed reaction is benzyl alcohol + NAD(+) = benzaldehyde + NADH + H(+). It carries out the reaction 4-cyanobenzyl alcohol + NAD(+) = 4-cyanobenzaldehyde + NADH + H(+). The enzyme catalyses 4-acetoxybenzyl alcohol + NAD(+) = 4-acetoxybenzaldehyde + NADH + H(+). It catalyses the reaction 4-(trifluoromethyl)benzyl alcohol + NAD(+) = 4-(trifluoromethyl)benzaldehyde + NADH + H(+). Its function is as follows. 7alpha-hydroxysteroid dehydrogenase involved in the metabolism of bile acids in the gut. Catalyzes the NAD(+)-dependent oxidation of the 7alpha-hydroxy group of 7alpha-hydroxysteroids, such as cholate, chenodeoxycholate, taurochenodeoxycholate, glycochenodeoxycholate, taurocholate and glycocholate, to the corresponding 7-oxosteroids. Since it is also able to catalyze the reduction of nonsteroidal carbonyl compounds such as various benzaldehyde analogs to their corresponding benzyl alcohols, this enzyme may also function in the detoxification of xenobiotics containing carbonyl groups in the large intestine. The polypeptide is 7alpha-hydroxysteroid dehydrogenase (Bacteroides fragilis (strain ATCC 25285 / DSM 2151 / CCUG 4856 / JCM 11019 / LMG 10263 / NCTC 9343 / Onslow / VPI 2553 / EN-2)).